Here is a 212-residue protein sequence, read N- to C-terminus: MARVAIIDYGINNVRSVRNAVEYCGHEAVVTHGNDGIADASHIILPGVGAFGDAMKKIRDRGLDEILARGVCEAGKPLLAVCLGMQLLAKTSEEHADDGEFFQGLGLIEADVRRLRPKDPDLKIPHMGWNNITKLREHPILVNMRETNLAFYFVHSFAMSCENEDDVVGRATYGQDVTAIVARDNIVGTQFHPEKSQDSGIELMSNFLQWNP.

Positions 3 to 212 (RVAIIDYGIN…LMSNFLQWNP (210 aa)) constitute a Glutamine amidotransferase type-1 domain. Residue cysteine 82 is the Nucleophile of the active site. Active-site residues include histidine 192 and glutamate 194.

As to quaternary structure, heterodimer of HisH and HisF.

The protein resides in the cytoplasm. It carries out the reaction 5-[(5-phospho-1-deoxy-D-ribulos-1-ylimino)methylamino]-1-(5-phospho-beta-D-ribosyl)imidazole-4-carboxamide + L-glutamine = D-erythro-1-(imidazol-4-yl)glycerol 3-phosphate + 5-amino-1-(5-phospho-beta-D-ribosyl)imidazole-4-carboxamide + L-glutamate + H(+). It catalyses the reaction L-glutamine + H2O = L-glutamate + NH4(+). The protein operates within amino-acid biosynthesis; L-histidine biosynthesis; L-histidine from 5-phospho-alpha-D-ribose 1-diphosphate: step 5/9. IGPS catalyzes the conversion of PRFAR and glutamine to IGP, AICAR and glutamate. The HisH subunit provides the glutamine amidotransferase activity that produces the ammonia necessary to HisF for the synthesis of IGP and AICAR. This Nitrobacter winogradskyi (strain ATCC 25391 / DSM 10237 / CIP 104748 / NCIMB 11846 / Nb-255) protein is Imidazole glycerol phosphate synthase subunit HisH 2.